The following is a 459-amino-acid chain: Flavin-containing monooxygenase FMO GS-OX1 (459 aa).

An FAD-binding site is contributed by 17 to 22 (GAGAAG). Residue 211-216 (GNYASG) participates in NADP(+) binding.

Belongs to the FMO family. The cofactor is FAD. In terms of tissue distribution, mainly expressed in leaves. Low levels in flowers and seeds.

It carries out the reaction a (Z)-omega-(methylsulfanyl)-N-sulfo-alkylhydroximate S-glucoside + NADPH + O2 + H(+) = a (Z)-omega-(methylsulfinyl)-alkyl-glucosinolate + NADP(+) + H2O. Catalyzes the conversion of methylthioalkyl glucosinolates into methylsulfinylalkyl glucosinolates. Able to S-oxygenate both desulfo- and intact 4-methylthiobutyl glucosinolates, but no activity with methionine, dihomomethionine or 5-methylthiopentaldoxime. In Arabidopsis thaliana (Mouse-ear cress), this protein is Flavin-containing monooxygenase FMO GS-OX1 (FMOGS-OX1).